Here is a 307-residue protein sequence, read N- to C-terminus: Lactamase-like protein vrtG (307 aa).

Histidine 97, histidine 99, aspartate 101, and histidine 102 together coordinate Zn(2+). Aspartate 101 (proton donor/acceptor) is an active-site residue.

It belongs to the metallo-beta-lactamase superfamily. It depends on Zn(2+) as a cofactor.

It participates in secondary metabolite biosynthesis; terpenoid biosynthesis. Lactamase-like protein; part of the gene cluster that mediates the biosynthesis of viridicatumtoxin, a tetracycline-like fungal meroterpenoid with a unique, fused spirobicyclic ring system. The first step of the pathway is the production of the malonamoyl-CoA starter unit for the polyketide synthase vrtA. The aldolase vrtJ may be involved in the synthesis of the malonamate substrate for malonamoyl-CoA synthetase vrtB. The polyketide synthase vrtA then may utilize the malonamoyl-CoA starter unit, followed by sequential condensation of eight malonyl-CoA units to form the polyketide backbone. The cyclization of the last ring could be mediated by the lactamase-like protein vrtG. The proposed post-PKS tailoring steps are a hydroxylation at C5 catalyzed the cytochrome P450 monooxygenase vrtE, a hydroxylation at C12a catalyzed by VrtH and/or VrtI, and an O-methylation by the O-methyltransferase vrtF. VrtC is then proposed to catalyze the transfer of a geranyl group synthesized by vrtD to the aromatic C ring of the tetracyclic polyketide intermediate of viridicatumtoxin to yield previridicatumtoxin. Finally, the cytochrome P450 monooxygenase vrtK catalyzes the spirocyclization of the geranyl moiety of previridicatumtoxin to afford viridicatumtoxin. The polypeptide is Lactamase-like protein vrtG (Penicillium aethiopicum).